Here is a 341-residue protein sequence, read N- to C-terminus: UDP-N-acetylenolpyruvoylglucosamine reductase (341 aa).

One can recognise an FAD-binding PCMH-type domain in the interval 13 to 185 (FGVEQSCLSM…TAVGLRLPKA (173 aa)). Arginine 161 is a catalytic residue. Serine 231 acts as the Proton donor in catalysis. Residue glutamate 327 is part of the active site.

It belongs to the MurB family. The cofactor is FAD.

It is found in the cytoplasm. It carries out the reaction UDP-N-acetyl-alpha-D-muramate + NADP(+) = UDP-N-acetyl-3-O-(1-carboxyvinyl)-alpha-D-glucosamine + NADPH + H(+). It participates in cell wall biogenesis; peptidoglycan biosynthesis. Functionally, cell wall formation. The sequence is that of UDP-N-acetylenolpyruvoylglucosamine reductase from Shewanella sp. (strain MR-7).